Here is a 324-residue protein sequence, read N- to C-terminus: MTENYQDDTLRIFSLNANRPLAEKIAASVGTELGKSTVRQFSDGEIQINIEESIRGDHVYIIQATNAPVNDHLMELLILIDALKRASAKTVNVILPYYGYARQDRTAKPREPITAKLVANMLVEAGATRLLTLDLHTVQVQGFFDIPVDNLFTMPLFAHYYRQQALVGEEIVIVSPKNSGVQRARSLSEYLDATLAIVDHEEIDGVRQEGYVIGNVAGKKCILVDDILNTGQTLATAAEVLMKNGAQEVYACASHGLLSEGAKATLENAPIKEISITDSVYTTADRQPATLNIISCAELMGEALLRIHENKPMSPLFRLEPKGE.

Residues 43-45 (DGE) and 102-103 (RQ) each bind ATP. Histidine 136 provides a ligand contact to Mg(2+). D-ribose 5-phosphate-binding positions include aspartate 225 and 229–233 (NTGQT).

It belongs to the ribose-phosphate pyrophosphokinase family. Class I subfamily. In terms of assembly, homohexamer. It depends on Mg(2+) as a cofactor.

Its subcellular location is the cytoplasm. The enzyme catalyses D-ribose 5-phosphate + ATP = 5-phospho-alpha-D-ribose 1-diphosphate + AMP + H(+). The protein operates within metabolic intermediate biosynthesis; 5-phospho-alpha-D-ribose 1-diphosphate biosynthesis; 5-phospho-alpha-D-ribose 1-diphosphate from D-ribose 5-phosphate (route I): step 1/1. Functionally, involved in the biosynthesis of the central metabolite phospho-alpha-D-ribosyl-1-pyrophosphate (PRPP) via the transfer of pyrophosphoryl group from ATP to 1-hydroxyl of ribose-5-phosphate (Rib-5-P). This chain is Putative ribose-phosphate pyrophosphokinase 1, found in Enterococcus faecalis (strain ATCC 700802 / V583).